The primary structure comprises 48 residues: uncharacterized protein (48 aa).

The first 21 residues, 1–21, serve as a signal peptide directing secretion; sequence MLENNVFRLMILMGGVIALIA.

This is an uncharacterized protein from Bacillus anthracis.